The primary structure comprises 111 residues: Aspartate 1-decarboxylase (111 aa).

The active-site Schiff-base intermediate with substrate; via pyruvic acid is Ser-25. The residue at position 25 (Ser-25) is a Pyruvic acid (Ser). Thr-57 serves as a coordination point for substrate. Tyr-58 acts as the Proton donor in catalysis. Position 73–75 (73–75) interacts with substrate; that stretch reads GPA.

Belongs to the PanD family. In terms of assembly, heterooctamer of four alpha and four beta subunits. Pyruvate serves as cofactor. Is synthesized initially as an inactive proenzyme, which is activated by self-cleavage at a specific serine bond to produce a beta-subunit with a hydroxyl group at its C-terminus and an alpha-subunit with a pyruvoyl group at its N-terminus.

It is found in the cytoplasm. The catalysed reaction is L-aspartate + H(+) = beta-alanine + CO2. It functions in the pathway cofactor biosynthesis; (R)-pantothenate biosynthesis; beta-alanine from L-aspartate: step 1/1. Catalyzes the pyruvoyl-dependent decarboxylation of aspartate to produce beta-alanine. In Francisella tularensis subsp. holarctica (strain LVS), this protein is Aspartate 1-decarboxylase.